Consider the following 30-residue polypeptide: Cycloviolacin-O4 (30 aa).

The cyclopeptide (Gly-Asn) cross-link spans 1 to 30 (GIPCGESCVWIPCISSAIGCSCKNKVCYRN). 3 disulfide bridges follow: Cys-4–Cys-20, Cys-8–Cys-22, and Cys-13–Cys-27.

In terms of processing, this is a cyclic peptide. As to expression, expressed in petals, petioles, roots and runners but not in leaves (at protein level).

In terms of biological role, probably participates in a plant defense mechanism. The polypeptide is Cycloviolacin-O4 (Viola odorata (Sweet violet)).